The chain runs to 156 residues: MVIATKHFGEIELEEDKILTFDHGIFGFEDCKRYTILYDGEDENSSVISWLQSLDEVSLALPIIQPSHVIDQYNPVIEDELLVSLGDIKEENIVVFLTLTVPSDLTKMTTNLKAPFIINTANKKGCQVVVEDPMFVVKYPVYEKFQNRAKKEDGEC.

Belongs to the FliW family. As to quaternary structure, interacts with translational regulator CsrA and flagellin(s).

Its subcellular location is the cytoplasm. Functionally, acts as an anti-CsrA protein, binds CsrA and prevents it from repressing translation of its target genes, one of which is flagellin. Binds to flagellin and participates in the assembly of the flagellum. In Lachnoclostridium phytofermentans (strain ATCC 700394 / DSM 18823 / ISDg) (Clostridium phytofermentans), this protein is Flagellar assembly factor FliW.